A 564-amino-acid chain; its full sequence is Mitochondrial distribution and morphology protein 34-1 (564 aa).

Residues 1–195 (MAFKFNWSPL…LPAIIHRLSL (195 aa)) form the SMP-LTD domain. 2 stretches are compositionally biased toward polar residues: residues 297-322 (PDQNDSSASVMSPISPPLSRTQSQTG) and 329-352 (DNASTSSAQSRTPTGPTQSFSSYG). 3 disordered regions span residues 297–408 (PDQN…VTSA), 414–433 (HEQPDDPVTPPLSPESDQSL), and 452–473 (DLSSEIVRDRAEPSEPRNPFNT). Residues 359–371 (RHSRAHARRRKKR) are compositionally biased toward basic residues. Low complexity predominate over residues 383–394 (SDSASVSVSDES). A compositionally biased stretch (polar residues) spans 396–408 (YTESASAPSVTSA). The span at 452-466 (DLSSEIVRDRAEPSE) shows a compositional bias: basic and acidic residues.

It belongs to the MDM34 family. Component of the ER-mitochondria encounter structure (ERMES) or MDM complex, composed of mmm1, mdm10, mdm12 and mdm34.

The protein resides in the mitochondrion outer membrane. In terms of biological role, component of the ERMES/MDM complex, which serves as a molecular tether to connect the endoplasmic reticulum (ER) and mitochondria. Components of this complex are involved in the control of mitochondrial shape and protein biogenesis, and function in nonvesicular lipid trafficking between the ER and mitochondria. Mdm34 is required for the interaction of the ER-resident membrane protein mmm1 and the outer mitochondrial membrane-resident beta-barrel protein mdm10. The chain is Mitochondrial distribution and morphology protein 34-1 from Penicillium rubens (strain ATCC 28089 / DSM 1075 / NRRL 1951 / Wisconsin 54-1255) (Penicillium chrysogenum).